The following is an 862-amino-acid chain: MAHTFRGCSLAFMFIITWLLIKAKIDACKRGDVTVKPSHVILLGSTVNITCSLKPRQGCFHYSRRNKLILYKFDRRINFHHGHSLNSQVTGLPLGTTLFVCKLACINSDEIQICGAEIFVGVAPEQPQNLSCIQKGEQGTVACTWERGRDTHLYTEYTLQLSGPKNLTWQKQCKDIYCDYLDFGINLTPESPESNFTAKVTAVNSLGSSSSLPSTFTFLDIVRPLPPWDIRIKFQKASVSRCTLYWRDEGLVLLNRLRYRPSNSRLWNMVNVTKAKGRHDLLDLKPFTEYEFQISSKLHLYKGSWSDWSESLRAQTPEEEPTGMLDVWYMKRHIDYSRQQISLFWKNLSVSEARGKILHYQVTLQELTGGKAMTQNITGHTSWTTVIPRTGNWAVAVSAANSKGSSLPTRINIMNLCEAGLLAPRQVSANSEGMDNILVTWQPPRKDPSAVQEYVVEWRELHPGGDTQVPLNWLRSRPYNVSALISENIKSYICYEIRVYALSGDQGGCSSILGNSKHKAPLSGPHINAITEEKGSILISWNSIPVQEQMGCLLHYRIYWKERDSNSQPQLCEIPYRVSQNSHPINSLQPRVTYVLWMTALTAAGESSHGNEREFCLQGKANWMAFVAPSICIAIIMVGIFSTHYFQQKVFVLLAALRPQWCSREIPDPANSTCAKKYPIAEEKTQLPLDRLLIDWPTPEDPEPLVISEVLHQVTPVFRHPPCSNWPQREKGIQGHQASEKDMMHSASSPPPPRALQAESRQLVDLYKVLESRGSDPKPENPACPWTVLPAGDLPTHDGYLPSNIDDLPSHEAPLADSLEELEPQHISLSVFPSSSLHPLTFSCGDKLTLDQLKMRCDSLML.

The N-terminal stretch at 1–23 is a signal peptide; that stretch reads MAHTFRGCSLAFMFIITWLLIKA. The Extracellular segment spans residues 24-622; that stretch reads KIDACKRGDV…REFCLQGKAN (599 aa). Residues asparagine 48, asparagine 129, asparagine 166, asparagine 195, and asparagine 271 are each glycosylated (N-linked (GlcNAc...) asparagine). Fibronectin type-III domains follow at residues 126–221, 226–319, 320–419, 423–520, and 521–620; these read QPQN…FLDI, PPWD…TPEE, EPTG…LCEA, APRQ…KHKA, and PLSG…LQGK. Residues 305-309 carry the WSXWS motif motif; that stretch reads WSDWS. Asparagine 347, asparagine 376, and asparagine 480 each carry an N-linked (GlcNAc...) asparagine glycan. A helical transmembrane segment spans residues 623–643; sequence WMAFVAPSICIAIIMVGIFST. Over 644–862 the chain is Cytoplasmic; it reads HYFQQKVFVL…LKMRCDSLML (219 aa). The Box 1 motif motif lies at 662–670; sequence CSREIPDPA. Positions 725-755 are disordered; the sequence is NWPQREKGIQGHQASEKDMMHSASSPPPPRA. Residues 728-744 are compositionally biased toward basic and acidic residues; it reads QREKGIQGHQASEKDMM. Residues 796–801 form a required for STAT4 binding region; sequence THDGYL. At tyrosine 800 the chain carries Phosphotyrosine.

The protein belongs to the type I cytokine receptor family. Type 2 subfamily. As to quaternary structure, heterodimer/heterooligomer; disulfide-linked. The functional high affinity IL12 receptor is composed of I12RB1 and IL12RB2. Il12RB2 binds JAK2 (via its N-terminal) through a membrane-proximal region of the cytoplasmic domain. Interaction, in vitro and in vivo, with SOCS3 (via its SH2 domain) inhibits the STAT4-mediated activation. Binds STAT4 through a membrane-distal C-terminal region. In terms of processing, on IL12 binding, phosphorylated on C-terminal tyrosine residues by JAK2. Phosphorylation on Tyr-800 is required for STAT4 binding and activation, and for SOCS3 binding. In terms of tissue distribution, isoform 2 is expressed at similar levels in both naive and activated T-cells.

The protein localises to the membrane. In terms of biological role, receptor for interleukin-12. This subunit is the signaling component coupling to the JAK2/STAT4 pathway. Promotes the proliferation of T-cells as well as NK cells. Induces the promotion of T-cells towards the Th1 phenotype by strongly enhancing IFN-gamma production. The polypeptide is Interleukin-12 receptor subunit beta-2 (IL12RB2) (Homo sapiens (Human)).